We begin with the raw amino-acid sequence, 839 residues long: Autophagy-related protein 9A (839 aa).

An N-acetylalanine modification is found at Ala2. The Cytoplasmic segment spans residues 2–61; sequence AQFDTEYQRLEASYSDSPPGEEDLLVHVAEGSKSPWHHIENLDLFFSRVYNLHQKNGFTC. Positions 8–11 match the Tyrosine-based sorting signal motif; the sequence is YQRL. Ser14, Ser16, and Ser18 each carry phosphoserine. Residues 62-84 traverse the membrane as a helical segment; that stretch reads MLIGEIFELMQFLFVVAFTTFLV. Over 85 to 128 the chain is Lumenal; the sequence is SCVDYDILFANKMVNHSLHPTEPVKVTLPDAFLPAQVCSARIQE. A glycan (N-linked (GlcNAc...) asparagine) is linked at Asn99. A helical transmembrane segment spans residues 129-154; sequence NGSLITILVIAGVFWIHRLIKFIYNI. Residues 155–290 lie on the Cytoplasmic side of the membrane; the sequence is CCYWEIHSFY…ELAQRLSNRI (136 aa). Residues 291–301 lie within the membrane without spanning it; sequence LWIGIANFLLC. Topologically, residues 302-319 are cytoplasmic; sequence PLILIWQILYAFFSYAEV. Residues 320–328 lie within the membrane without spanning it; the sequence is LKREPGALG. At 329-371 the chain is on the cytoplasmic side; it reads ARCWSLYGRCYLRHFNELEHELQSRLNRGYKPASKYMNCFLSP. Residues 372-397 traverse the membrane as a helical segment; the sequence is LLTLLAKNGAFFAGSILAVLIALTIY. The Lumenal portion of the chain corresponds to 398 to 406; sequence DEDVLAVEH. The chain crosses the membrane as a helical span at residues 407–424; sequence VLTTVTLLGVTVTVCRSF. Residues 425 to 470 lie on the Cytoplasmic side of the membrane; sequence IPDQHMVFCPEQLLRVILAHIHYMPDHWQGNAHRSQTRDEFAQLFQ. Residues 471–480 lie within the membrane without spanning it; the sequence is YKAVFILEEL. Residues 481–483 are Cytoplasmic-facing; that stretch reads LSP. Residues 484–492 lie within the membrane without spanning it; it reads IVTPLILIF. At 493-839 the chain is on the cytoplasmic side; sequence CLRPRALEII…DELPPQVHKV (347 aa). Residues Ser656, Ser735, Ser738, Ser741, and Ser828 each carry the phosphoserine modification. Disordered regions lie at residues 656–689 and 717–839; these read SPLQ…SSVW and HKQQ…VHKV. Residues 724 to 736 are compositionally biased toward basic and acidic residues; it reads EPERHVWHRRESD. Composition is skewed to acidic residues over residues 737 to 747 and 823 to 832; these read ESGESAPEEGG and VPEEGSEDEL.

Belongs to the ATG9 family. As to quaternary structure, homotrimer; forms a homotrimer with a central pore that forms a path between the two membrane leaflets. Interacts (via cytoplasmic its C-terminus) with ATG2A. Interacts with SUPT20H. Interacts (via the tyrosine-based sorting signal motif) with AP4M1; promoting association with the AP-4 complex. Interacts with ARFIP1 and ARFIP2. Interacts with PI4K2A and PI4KB. Interacts with ATG4A; the interaction is direct and promotes ATG9A trafficking. Ufmylated in a DDRGK1 dependent manner.

Its subcellular location is the preautophagosomal structure membrane. The protein resides in the cytoplasmic vesicle. It is found in the autophagosome membrane. The protein localises to the golgi apparatus. It localises to the trans-Golgi network membrane. Its subcellular location is the late endosome membrane. The protein resides in the recycling endosome membrane. It is found in the endoplasmic reticulum membrane. The protein localises to the mitochondrion membrane. The catalysed reaction is a 1,2-diacyl-sn-glycero-3-phosphocholine(in) = a 1,2-diacyl-sn-glycero-3-phosphocholine(out). The enzyme catalyses a 1,2-diacyl-sn-glycero-3-phospho-L-serine(in) = a 1,2-diacyl-sn-glycero-3-phospho-L-serine(out). It catalyses the reaction a 1,2-diacyl-sn-glycero-3-phosphoethanolamine(in) = a 1,2-diacyl-sn-glycero-3-phosphoethanolamine(out). Its function is as follows. Phospholipid scramblase involved in autophagy by mediating autophagosomal membrane expansion. Cycles between the preautophagosomal structure/phagophore assembly site (PAS) and the cytoplasmic vesicle pool and supplies membrane for the growing autophagosome. Lipid scramblase activity plays a key role in preautophagosomal structure/phagophore assembly by distributing the phospholipids that arrive through ATG2 (ATG2A or ATG2B) from the cytoplasmic to the luminal leaflet of the bilayer, thereby driving autophagosomal membrane expansion. Also required to supply phosphatidylinositol 4-phosphate to the autophagosome initiation site by recruiting the phosphatidylinositol 4-kinase beta (PI4KB) in a process dependent on ARFIP2, but not ARFIP1. In addition to autophagy, also plays a role in necrotic cell death. In Rattus norvegicus (Rat), this protein is Autophagy-related protein 9A.